A 354-amino-acid chain; its full sequence is Phosphatidylserine decarboxylase proenzyme (354 aa).

The chain crosses the membrane as a helical span at residues 18–36 (YLITGVTILSFILMFQYKY). Active-site charge relay system; for autoendoproteolytic cleavage activity residues include Asp-139, His-198, and Ser-308. Ser-308 (schiff-base intermediate with substrate; via pyruvic acid; for decarboxylase activity) is an active-site residue. Ser-308 is subject to Pyruvic acid (Ser); by autocatalysis.

It belongs to the phosphatidylserine decarboxylase family. PSD-B subfamily. Eukaryotic type I sub-subfamily. In terms of assembly, heterodimer of a large membrane-associated beta subunit and a small pyruvoyl-containing alpha subunit. Pyruvate is required as a cofactor. Post-translationally, is synthesized initially as an inactive proenzyme. Formation of the active enzyme involves a self-maturation process in which the active site pyruvoyl group is generated from an internal serine residue via an autocatalytic post-translational modification. Two non-identical subunits are generated from the proenzyme in this reaction, and the pyruvate is formed at the N-terminus of the alpha chain, which is derived from the carboxyl end of the proenzyme. The autoendoproteolytic cleavage occurs by a canonical serine protease mechanism, in which the side chain hydroxyl group of the serine supplies its oxygen atom to form the C-terminus of the beta chain, while the remainder of the serine residue undergoes an oxidative deamination to produce ammonia and the pyruvoyl prosthetic group on the alpha chain. During this reaction, the Ser that is part of the protease active site of the proenzyme becomes the pyruvoyl prosthetic group, which constitutes an essential element of the active site of the mature decarboxylase.

The protein resides in the membrane. It is found in the endoplasmic reticulum membrane. The enzyme catalyses a 1,2-diacyl-sn-glycero-3-phospho-L-serine + H(+) = a 1,2-diacyl-sn-glycero-3-phosphoethanolamine + CO2. The protein operates within phospholipid metabolism; phosphatidylethanolamine biosynthesis; phosphatidylethanolamine from CDP-diacylglycerol: step 2/2. Its activity is regulated as follows. Protease activity is inhibited by PMSF. Catalyzes the formation of phosphatidylethanolamine (PtdEtn) from phosphatidylserine (PtdSer). Plays a central role in phospholipid metabolism and in the interorganelle trafficking of phosphatidylserine. The protein is Phosphatidylserine decarboxylase proenzyme of Plasmodium knowlesi (strain H).